A 243-amino-acid chain; its full sequence is MAEKACIKRLQKEYRALCKEPVSHVVARPSPNDILEWHYVLEGSEGTPFAGGFYYGKIKFPPEYPYKPPGITMTTPNGRFVTQKKICLSMSDFHPESWNPMWSVSSILTGLLSFMMDNSPTTGSVNTSVAEKQRLAKSSLAFNCKSVTFRKLFPEYVEKYSQQQVAEEEAATQQTTTSENQDFPQKDNAKVESEKSVGLKKESIQEVGLKERRRNKKEALPGWIVLLLVSIVGVVMALPLLQL.

Residues 5–162 (ACIKRLQKEY…FPEYVEKYSQ (158 aa)) form the UBC core domain. Cysteine 87 serves as the catalytic Glycyl thioester intermediate. Residues 168 to 197 (EEAATQQTTTSENQDFPQKDNAKVESEKSV) form a disordered region. A compositionally biased stretch (basic and acidic residues) spans 184-197 (PQKDNAKVESEKSV). The chain crosses the membrane as a helical span at residues 220–240 (LPGWIVLLLVSIVGVVMALPL).

It belongs to the ubiquitin-conjugating enzyme family.

Its subcellular location is the membrane. It catalyses the reaction S-ubiquitinyl-[E1 ubiquitin-activating enzyme]-L-cysteine + [E2 ubiquitin-conjugating enzyme]-L-cysteine = [E1 ubiquitin-activating enzyme]-L-cysteine + S-ubiquitinyl-[E2 ubiquitin-conjugating enzyme]-L-cysteine.. The protein operates within protein modification; protein ubiquitination. In terms of biological role, accepts the ubiquitin from the E1 complex and catalyzes its covalent attachment to other proteins. This Arabidopsis thaliana (Mouse-ear cress) protein is Probable ubiquitin-conjugating enzyme E2 33 (UBC33).